We begin with the raw amino-acid sequence, 4730 residues long: Dynein heavy chain, cytoplasmic (4730 aa).

Disordered stretches follow at residues 1–23 (MEDQ…VVTP) and 91–120 (TINS…QQQS). The stem stretch occupies residues 1–1935 (MEDQQINVDS…VIHMANATFY (1935 aa)). The span at 10 to 23 (SPTSGTNTPPVVTP) shows a compositional bias: low complexity. A coiled-coil region spans residues 867–900 (VRKLSTSINNFRDKVDDLIVKYSEIKKQLDGLKS). Residues 964–1016 (EDQKDSQSTSGSSNKGGKLNRMNYSIRNKSDEENSSDLTQPQQSQQQQQTISI) form a disordered region. Polar residues predominate over residues 969–978 (SQSTSGSSNK). Low complexity predominate over residues 1002-1016 (TQPQQSQQQQQTISI). Coiled coils occupy residues 1204–1224 (EKMN…EKLS), 1343–1372 (ALET…QALD), 1425–1441 (RKVR…LKNL), and 1661–1689 (AIER…YLER). AAA regions lie at residues 1936 to 2158 (YGFE…VLVS), 2238 to 2531 (KKIQ…FTRL), 2635 to 2885 (EVET…WDRA), and 2978 to 3252 (VFYE…QGRQ). An ATP-binding site is contributed by 1974-1981 (GPAGTGKT). A coiled-coil region spans residues 2231 to 2253 (IQMDQLRKKIQEIAKQRHLVTKQ). 2276-2283 (GPSGGGKT) contacts ATP. Residues 2437 to 2486 (EPFDPQEKEQQKRNENAQLQQQQQTTITSPILTSPPTTSSSSRSTTSTTS) form a disordered region. Residues 2441 to 2451 (PQEKEQQKRNE) show a composition bias toward basic and acidic residues. Residues 2442-2462 (QEKEQQKRNENAQLQQQQQTT) are a coiled coil. Residues 2454-2486 (QLQQQQQTTITSPILTSPPTTSSSSRSTTSTTS) show a composition bias toward low complexity. Residues 2674–2681 (GPPGSGKT) and 3016–3023 (GVSGGGKS) each bind ATP. 3 coiled-coil regions span residues 3271-3349 (INEK…VQLD), 3483-3585 (AQTY…NTQM), and 3854-3881 (TLET…EISE). The stalk stretch occupies residues 3271–3585 (INEKRDQLEE…QQSENFNTQM (315 aa)). AAA regions lie at residues 3638–3867 (LSKP…EIAL) and 4098–4312 (SHSF…SIDY). The interval 4432–4465 (KMQSSEEDGEDDQVSGSSKKESSSSSSEDKGKAK) is disordered. The span at 4449-4463 (SKKESSSSSSEDKGK) shows a compositional bias: basic and acidic residues.

The protein belongs to the dynein heavy chain family. As to quaternary structure, consists of at least two heavy chains and a number of intermediate and light chains.

The protein localises to the cytoplasm. The protein resides in the cytoskeleton. Functionally, cytoplasmic dynein acts as a motor for the intracellular retrograde motility of vesicles and organelles along microtubules. Dynein has ATPase activity; the force-producing power stroke is thought to occur on release of ADP. The sequence is that of Dynein heavy chain, cytoplasmic (dhcA) from Dictyostelium discoideum (Social amoeba).